The chain runs to 307 residues: Small ribosomal subunit protein uS3 (307 aa).

Residues 17-86 form the KH type-2 domain; the sequence is MDEYFAEQLN…NPQIDAQEVK (70 aa). Residues 201-226 are compositionally biased toward basic and acidic residues; it reads IEEPAEKPAEKQVEKPAVAPKKEAAK. Positions 201–265 are disordered; sequence IEEPAEKPAE…QVEASEDFEE (65 aa). Residues 240–265 show a composition bias toward acidic residues; the sequence is PTEEPEVAEPEEAEEAQVEASEDFEE.

It belongs to the universal ribosomal protein uS3 family. In terms of assembly, part of the 30S ribosomal subunit.

Its function is as follows. Binds the lower part of the 30S subunit head. This is Small ribosomal subunit protein uS3 from Methanosarcina mazei (strain ATCC BAA-159 / DSM 3647 / Goe1 / Go1 / JCM 11833 / OCM 88) (Methanosarcina frisia).